A 285-amino-acid chain; its full sequence is Nucleotide-binding protein GSU1884 (285 aa).

G8–S15 contributes to the ATP binding site. A GTP-binding site is contributed by D59–G62.

Belongs to the RapZ-like family.

Its function is as follows. Displays ATPase and GTPase activities. This is Nucleotide-binding protein GSU1884 from Geobacter sulfurreducens (strain ATCC 51573 / DSM 12127 / PCA).